Here is a 796-residue protein sequence, read N- to C-terminus: Polyribonucleotide nucleotidyltransferase (796 aa).

The Mg(2+) site is built by D490 and D496. One can recognise a KH domain in the interval 557-616 (PRIESIFINKDKIRNVIGSGGKNIRDICEKTGAKIEIIQDGTVMIYAVNNEAVEYAKSMI). An S1 motif domain is found at 626–693 (GKVFEGTVVE…DREHVQLSMR (68 aa)). The segment covering 714-736 (SFSDDSSSSGTSSSGSSFKESYS) has biased composition (low complexity). The tract at residues 714-796 (SFSDDSSSSG…HEVPRKPRFF (83 aa)) is disordered. The segment covering 740–755 (HGSHEKRRSGGSRSSR) has biased composition (basic residues). The segment covering 771 to 784 (SDFGNNNRSFSNSR) has biased composition (low complexity). The segment covering 785–796 (NGHEVPRKPRFF) has biased composition (basic and acidic residues).

This sequence belongs to the polyribonucleotide nucleotidyltransferase family. Requires Mg(2+) as cofactor.

It localises to the cytoplasm. It carries out the reaction RNA(n+1) + phosphate = RNA(n) + a ribonucleoside 5'-diphosphate. In terms of biological role, involved in mRNA degradation. Catalyzes the phosphorolysis of single-stranded polyribonucleotides processively in the 3'- to 5'-direction. The chain is Polyribonucleotide nucleotidyltransferase from Ehrlichia canis (strain Jake).